A 270-amino-acid chain; its full sequence is 4-hydroxy-tetrahydrodipicolinate reductase (270 aa).

NAD(+) contacts are provided by residues 11–16 (GASGRM) and Glu37. Arg38 contributes to the NADP(+) binding site. NAD(+)-binding positions include 101 to 103 (GTT) and 125 to 128 (APNM). The active-site Proton donor/acceptor is His158. Residue His159 participates in (S)-2,3,4,5-tetrahydrodipicolinate binding. The active-site Proton donor is the Lys162. 168–169 (GT) is a (S)-2,3,4,5-tetrahydrodipicolinate binding site.

It belongs to the DapB family.

The protein resides in the cytoplasm. It carries out the reaction (S)-2,3,4,5-tetrahydrodipicolinate + NAD(+) + H2O = (2S,4S)-4-hydroxy-2,3,4,5-tetrahydrodipicolinate + NADH + H(+). The catalysed reaction is (S)-2,3,4,5-tetrahydrodipicolinate + NADP(+) + H2O = (2S,4S)-4-hydroxy-2,3,4,5-tetrahydrodipicolinate + NADPH + H(+). The protein operates within amino-acid biosynthesis; L-lysine biosynthesis via DAP pathway; (S)-tetrahydrodipicolinate from L-aspartate: step 4/4. Its function is as follows. Catalyzes the conversion of 4-hydroxy-tetrahydrodipicolinate (HTPA) to tetrahydrodipicolinate. This Shewanella frigidimarina (strain NCIMB 400) protein is 4-hydroxy-tetrahydrodipicolinate reductase.